Reading from the N-terminus, the 827-residue chain is MVSAQLHFLCLLTLYLTCGYGEEGKFSGPLKPMTFSIFEGQEPSQVIFQFKTNPPAVTFELTGETDGIFKIEKDGLLYHTRALDRETRAVHHLQLAALDSHGAIVDGPVPITIEVKDINDNRPTFLQSKYEGSVRQNSRPGKPFMYVNATDLDDPATPNGQLFYQIVIQLPQINDVMYFQIDSKTGAISLTPEGSQELDPVKNPSYNLVVSVKDMGGQSENSFSDTTYVDISIRENIWKAPEPVEIRENSTDPHPIKITQVQWNDPGAQYSLVNKEKLSPFPFSIDQEGNIYVTQALDREEKNSHVFFATAKDENGKPLAYPLEIYVKVIDINDNPPTCLSPVTVFEVQENEPLGNSIGIFEAHDMDEANNINSILKYKLVDQTPKVPSDGLFLIGEYEGKVQLSKQSLKKQDSPQYNLSIEVSDVDFKTLCYIQVNVIDINDQIPIFETSNYGSKTLSEDTAIGSTILIIQATDADEPFTGSSKILYKIVQGDTEGRLEVVTDPTTNAGYVKIKKPLDFETQPVSSIVFQAENPEPLVKGIEYNASSFASFELIVTDVNEVPVFPQRIFQANVSEDAAVGSRVGNVTARDPEGLTVSYSLKGNMRGWLKIDSVTGEIFSAAPLDRETESVYRVQVVATEVGGSSLSSTADFHLVLTDVNDNPPRLAKDYTGLFFCHPLSAPGSLIFEVTDDDQQSLRRPKFTFALGREGLQSDWEVSKINGTHARLSTRHTRFEEQVYNIPIRINDGGQPPMEGTVFLPVTFCQCVEGSCFRPAGRQDGIPTVGMAVGILLTTFLVIGIILAVVFIRMRKDKVENPQSPENKPLRS.

A signal peptide spans 1–25 (MVSAQLHFLCLLTLYLTCGYGEEGK). The Extracellular portion of the chain corresponds to 26-786 (FSGPLKPMTF…RQDGIPTVGM (761 aa)). 7 Cadherin domains span residues 29 to 127 (PLKP…TFLQ), 128 to 243 (SKYE…APEP), 244 to 339 (VEIR…PPTC), 340 to 448 (LSPV…IPIF), 449 to 565 (ETSN…VPVF), 566 to 666 (PQRI…PPRL), and 667 to 776 (AKDY…RPAG). Residues asparagine 148, asparagine 249, asparagine 418, asparagine 545, asparagine 573, asparagine 586, and asparagine 721 are each glycosylated (N-linked (GlcNAc...) asparagine). Residues 787–807 (AVGILLTTFLVIGIILAVVFI) form a helical membrane-spanning segment. Over 808-827 (RMRKDKVENPQSPENKPLRS) the chain is Cytoplasmic.

Highest expression is found in intestine with lower expression in spleen, bone marrow, lung and testis. No expression detected in liver, kidney, heart, brain or skeletal muscle. Expressed in precursor B-cells and myeloid cells.

The protein localises to the cell membrane. In terms of biological role, cadherins are calcium-dependent cell adhesion proteins. They preferentially interact with themselves in a homophilic manner in connecting cells; cadherins may thus contribute to the sorting of heterogeneous cell types. LI-cadherin may have a role in the morphological organization of liver and intestine. This is Cadherin-17 (Cdh17) from Mus musculus (Mouse).